A 512-amino-acid polypeptide reads, in one-letter code: Zinc finger CCCH-type with G patch domain-containing protein (512 aa).

The C3H1-type zinc-finger motif lies at 159–186; it reads QEMVPCAYFLEGDCKFNDEMCRFSHGEL. Residues 255-280 form a disordered region; the sequence is LEGDDVPSSDSESNSDSDEENEDDVV. Acidic residues predominate over residues 256 to 279; sequence EGDDVPSSDSESNSDSDEENEDDV. A G-patch domain is found at 308–354; that stretch reads TKGIGSKIMLKMGYVVGAGLGSKGEGIVVPVSAQVLPQGRSLDYCMQ. Residues 407-417 are compositionally biased toward low complexity; the sequence is SSNGSSSSSGS. The disordered stretch occupies residues 407 to 432; sequence SSNGSSSSSGSKKPAAKDNQMDLPSC.

Its subcellular location is the nucleus. Functionally, transcription repressor. This is Zinc finger CCCH-type with G patch domain-containing protein from Aedes aegypti (Yellowfever mosquito).